Consider the following 437-residue polypeptide: MRASVVLTCYCWLLVRVSSIHPECRFHLEIQEEETKCAELLSSQTENQRACSGVWDNITCWRPADVGETVTVPCPKVFSNFYSRPGNISKNCTSDGWSETFPDFIDACGYNDPEDESKISFYILVKAIYTLGYSVSLMSLTTGSIIICLFRKLHCTRNYIHLNLFLSFMLRAISVLVKDSVLYSSSGLLRCHDQPASWVGCKLSLVFFQYCIMANFYWLLVEGLYLHTLLVAILPPSRCFLAYLLIGWGIPSVCIGAWTATRLSLEDTGCWDTNDHSIPWWVIRMPILISIVVNFALFISIVRILLQKLTSPDVGGNDQSQYKRLAKSTLLLIPLFGVHYMVFAAFPIGISSTYQILFELCVGSFQGLVVAVLYCFLNSEVQCELKRRWRGLCLTQAGSRDYRLHSWSMSRNGSESALQIHRGSRTQSFLQSETSVI.

The signal sequence occupies residues 1–22; it reads MRASVVLTCYCWLLVRVSSIHP. At 23 to 123 the chain is on the extracellular side; it reads ECRFHLEIQE…EDESKISFYI (101 aa). 3 disulfide bridges follow: cysteine 37/cysteine 60, cysteine 51/cysteine 92, and cysteine 74/cysteine 108. Residues asparagine 57, asparagine 87, and asparagine 91 are each glycosylated (N-linked (GlcNAc...) asparagine). Residues 124–149 form a helical membrane-spanning segment; it reads LVKAIYTLGYSVSLMSLTTGSIIICL. The Cytoplasmic segment spans residues 150–157; that stretch reads FRKLHCTR. A helical transmembrane segment spans residues 158-179; that stretch reads NYIHLNLFLSFMLRAISVLVKD. Residues 180-202 are Extracellular-facing; the sequence is SVLYSSSGLLRCHDQPASWVGCK. A disulfide bridge links cysteine 201 with cysteine 270. The chain crosses the membrane as a helical span at residues 203 to 227; sequence LSLVFFQYCIMANFYWLLVEGLYLH. Topologically, residues 228–238 are cytoplasmic; the sequence is TLLVAILPPSR. The chain crosses the membrane as a helical span at residues 239-260; it reads CFLAYLLIGWGIPSVCIGAWTA. Residues 261–279 are Extracellular-facing; sequence TRLSLEDTGCWDTNDHSIP. The chain crosses the membrane as a helical span at residues 280–303; the sequence is WWVIRMPILISIVVNFALFISIVR. The Cytoplasmic segment spans residues 304 to 324; sequence ILLQKLTSPDVGGNDQSQYKR. The chain crosses the membrane as a helical span at residues 325–345; it reads LAKSTLLLIPLFGVHYMVFAA. Topologically, residues 346-353 are extracellular; that stretch reads FPIGISST. The chain crosses the membrane as a helical span at residues 354–377; that stretch reads YQILFELCVGSFQGLVVAVLYCFL. Over 378 to 437 the chain is Cytoplasmic; that stretch reads NSEVQCELKRRWRGLCLTQAGSRDYRLHSWSMSRNGSESALQIHRGSRTQSFLQSETSVI.

It belongs to the G-protein coupled receptor 2 family. Interacts with ADCYAP1/PACAP (via N-terminal extracellular domain); activated by PACAP27 and CAPAC38 neuropeptides. Interacts with VIP; the interaction results in VIPR1 activation. In terms of tissue distribution, expressed at high levels in the MIN6 cells, at moderate levels in pancreatic islets, insulin-secreting cells, lung, brain, stomach, and colon, and at low levels in the heart.

It is found in the cell membrane. Its function is as follows. G protein-coupled receptor activated by the neuropeptides vasoactive intestinal peptide (VIP) and pituitary adenylate cyclase-activating polypeptide (ADCYAP1/PACAP). Binds VIP and both PACAP27 and PACAP38 bioactive peptides with the order of ligand affinity of VIP = PACAP38 &gt; PACAP27. Ligand binding causes a conformation change that triggers signaling via guanine nucleotide-binding proteins (G proteins) and modulates the activity of downstream effectors. Activates cAMP-dependent pathway. May be coupled to phospholipase C. The protein is Vasoactive intestinal polypeptide receptor 2 of Mus musculus (Mouse).